Here is a 629-residue protein sequence, read N- to C-terminus: DNA mismatch repair protein MutL (629 aa).

It belongs to the DNA mismatch repair MutL/HexB family.

Its function is as follows. This protein is involved in the repair of mismatches in DNA. It is required for dam-dependent methyl-directed DNA mismatch repair. May act as a 'molecular matchmaker', a protein that promotes the formation of a stable complex between two or more DNA-binding proteins in an ATP-dependent manner without itself being part of a final effector complex. This Haemophilus influenzae (strain 86-028NP) protein is DNA mismatch repair protein MutL.